Consider the following 433-residue polypeptide: Enolase (433 aa).

Q163 contributes to the (2R)-2-phosphoglycerate binding site. E205 functions as the Proton donor in the catalytic mechanism. D242, E286, and D313 together coordinate Mg(2+). (2R)-2-phosphoglycerate contacts are provided by K338, R367, S368, and K389. The Proton acceptor role is filled by K338.

The protein belongs to the enolase family. It depends on Mg(2+) as a cofactor.

The protein localises to the cytoplasm. Its subcellular location is the secreted. The protein resides in the cell surface. The enzyme catalyses (2R)-2-phosphoglycerate = phosphoenolpyruvate + H2O. Its pathway is carbohydrate degradation; glycolysis; pyruvate from D-glyceraldehyde 3-phosphate: step 4/5. In terms of biological role, catalyzes the reversible conversion of 2-phosphoglycerate (2-PG) into phosphoenolpyruvate (PEP). It is essential for the degradation of carbohydrates via glycolysis. This Koribacter versatilis (strain Ellin345) protein is Enolase.